Reading from the N-terminus, the 438-residue chain is Glutamyl-tRNA(Gln) amidotransferase subunit D (438 aa).

In terms of domain architecture, Asparaginase/glutaminase spans 91-421; it reads KNLSILSTGG…SEIYEIMKTN (331 aa). Catalysis depends on residues T101, T177, D178, and K254.

It belongs to the asparaginase 1 family. GatD subfamily. As to quaternary structure, heterodimer of GatD and GatE.

The enzyme catalyses L-glutamyl-tRNA(Gln) + L-glutamine + ATP + H2O = L-glutaminyl-tRNA(Gln) + L-glutamate + ADP + phosphate + H(+). Allows the formation of correctly charged Gln-tRNA(Gln) through the transamidation of misacylated Glu-tRNA(Gln) in organisms which lack glutaminyl-tRNA synthetase. The reaction takes place in the presence of glutamine and ATP through an activated gamma-phospho-Glu-tRNA(Gln). The GatDE system is specific for glutamate and does not act on aspartate. The protein is Glutamyl-tRNA(Gln) amidotransferase subunit D of Methanosphaera stadtmanae (strain ATCC 43021 / DSM 3091 / JCM 11832 / MCB-3).